The chain runs to 968 residues: RNA polymerase-associated protein RapA (968 aa).

Positions 164–334 (DVGRRHAPRV…FARLRLLDPN (171 aa)) constitute a Helicase ATP-binding domain. Residue 177 to 184 (DEVGLGKT) coordinates ATP. The short motif at 280–283 (DEAH) is the DEAH box element. Residues 490–685 (RVEWLMGYLT…ALKAQLEQGR (196 aa)) form the Helicase C-terminal domain.

The protein belongs to the SNF2/RAD54 helicase family. RapA subfamily. As to quaternary structure, interacts with the RNAP. Has a higher affinity for the core RNAP than for the holoenzyme. Its ATPase activity is stimulated by binding to RNAP.

In terms of biological role, transcription regulator that activates transcription by stimulating RNA polymerase (RNAP) recycling in case of stress conditions such as supercoiled DNA or high salt concentrations. Probably acts by releasing the RNAP, when it is trapped or immobilized on tightly supercoiled DNA. Does not activate transcription on linear DNA. Probably not involved in DNA repair. The protein is RNA polymerase-associated protein RapA of Salmonella paratyphi C (strain RKS4594).